The chain runs to 220 residues: MLMEDADVLWYHTVEKLKREGIIRSEKVRQAFLKVPRYLFVLPEHKKWAHVDEPLPIPGGQTISAPHMVAIMLELAELEEGMNVLDIGTGSGWNAALAAELVKTDVYTVERIPELVEFARKNLEKAGYADRVHVIIGDGTKGFPPKAPYDRILVAAGAPNVPEPLVEQLKPGGKLIIPVGSYHLWQELYEVIKLKDGSVKVKRHGGVAFVPLIGEHGWKE.

Ser-64 is a catalytic residue.

This sequence belongs to the methyltransferase superfamily. L-isoaspartyl/D-aspartyl protein methyltransferase family.

It is found in the cytoplasm. The enzyme catalyses [protein]-L-isoaspartate + S-adenosyl-L-methionine = [protein]-L-isoaspartate alpha-methyl ester + S-adenosyl-L-homocysteine. Catalyzes the methyl esterification of L-isoaspartyl residues in peptides and proteins that result from spontaneous decomposition of normal L-aspartyl and L-asparaginyl residues. It plays a role in the repair and/or degradation of damaged proteins. The polypeptide is Protein-L-isoaspartate O-methyltransferase (Thermococcus onnurineus (strain NA1)).